Consider the following 473-residue polypeptide: MKTDTSTFLAQQIVRLRRRDQIRRLMQRDKTPLAILFMAAVVGTLTGLVGVAFEKTVSWVQNMRIGALVQVADHAFLLWPLAFILSALLAMVGYFLVRKFAPEAGGSGIPEIEGALEELRPVRWWRVLPVKFIGGMGTLGAGMVLGREGPTVQIGGNLGRMVLDVFRMRSAEARHTLLATGAAAGLSAAFNAPLAGILFIIEEMRPQFRYNLISIKAVFTGVIMSSIVFRIFNGEAPIIEVGKLSDAPVNTLWLYLILGIIFGCVGPVFNSLVLRTQDMFQRFHGGEIKKWVLMGGAIGGLCGILGLIEPAAAGGGFNLIPIAAAGNFSVGLLLFIFITRVVTTLLCFSSGAPGGIFAPMLALGTLLGTAFGMAAAVLFPQYHLEAGTFAIAGMGALMAASVRAPLTGIVLVLEMTDNYQLILPMIITCLGATLLAQFLGGKPLYSTILARTLAKQDAEQAAKNQNAPAGENT.

Over 1 to 32 the chain is Cytoplasmic; the sequence is MKTDTSTFLAQQIVRLRRRDQIRRLMQRDKTP. The helical transmembrane segment at 33–69 threads the bilayer; the sequence is LAILFMAAVVGTLTGLVGVAFEKTVSWVQNMRIGALV. The Periplasmic segment spans residues 70–76; that stretch reads QVADHAF. Residues 77–100 form a helical membrane-spanning segment; the sequence is LLWPLAFILSALLAMVGYFLVRKF. Positions 106–110 match the Selectivity filter part_1 motif; the sequence is GSGIP. Residue S107 coordinates chloride. An intramembrane region (helical) is located at residues 109–116; the sequence is IPEIEGAL. The Cytoplasmic portion of the chain corresponds to 117 to 123; that stretch reads EELRPVR. The next 2 helical transmembrane spans lie at 124–141 and 148–166; these read WWRV…TLGA and EGPT…LDVF. Residues 146–150 carry the Selectivity filter part_2 motif; sequence GREGP. The Cytoplasmic portion of the chain corresponds to 167–176; it reads RMRSAEARHT. Intramembrane regions (helical) lie at residues 177–189 and 193–201; these read LLAT…LSAA and PLAGILFII. Over 202 to 214 the chain is Cytoplasmic; sequence EEMRPQFRYNLIS. The helical transmembrane segment at 215 to 232 threads the bilayer; sequence IKAVFTGVIMSSIVFRIF. The Periplasmic segment spans residues 233-252; sequence NGEAPIIEVGKLSDAPVNTL. The helical transmembrane segment at 253 to 281 threads the bilayer; the sequence is WLYLILGIIFGCVGPVFNSLVLRTQDMFQ. The Cytoplasmic portion of the chain corresponds to 282–287; the sequence is RFHGGE. Residues 288–309 form a helical membrane-spanning segment; it reads IKKWVLMGGAIGGLCGILGLIE. The Periplasmic segment spans residues 310–329; sequence PAAAGGGFNLIPIAAAGNFS. 2 helical membrane passes run 330 to 349 and 355 to 376; these read VGLL…LCFS and GIFA…MAAA. Positions 355–359 match the Selectivity filter part_3 motif; that stretch reads GIFAP. Chloride contacts are provided by I356 and F357. Residues 377–386 lie on the Periplasmic side of the membrane; that stretch reads VLFPQYHLEA. The helical intramembrane region spans 387–401; sequence GTFAIAGMGALMAAS. Residues 402 to 404 constitute an intramembrane region (note=Loop between two helices); sequence VRA. Residues 405–416 constitute an intramembrane region (helical); it reads PLTGIVLVLEMT. An intramembrane region (note=Loop between two helices) is located at residues 417-421; it reads DNYQL. Residues 422 to 438 form a helical membrane-spanning segment; sequence ILPMIITCLGATLLAQF. Residues 439–473 are Cytoplasmic-facing; the sequence is LGGKPLYSTILARTLAKQDAEQAAKNQNAPAGENT. Residue Y445 participates in chloride binding.

The protein belongs to the chloride channel (TC 2.A.49) family. ClcA subfamily. In terms of assembly, homodimer.

It is found in the cell inner membrane. It catalyses the reaction 2 chloride(in) + H(+)(out) = 2 chloride(out) + H(+)(in). Its function is as follows. Proton-coupled chloride transporter. Functions as antiport system and exchanges two chloride ions for 1 proton. Probably acts as an electrical shunt for an outwardly-directed proton pump that is linked to amino acid decarboxylation, as part of the extreme acid resistance (XAR) response. The protein is H(+)/Cl(-) exchange transporter ClcA of Salmonella typhi.